Reading from the N-terminus, the 414-residue chain is MKELILKGERAKEASYVLMNATTSEKNDALIKMGQKLLENKEYIIAENKKDLENAMLKGTSKAMLDRLYLDEKRLEDMADGLNQLVNLNDPIGEVITMWKRPNGLQIGKQRVPMGVIGIIYEARPNVTCDAAGLCLKAGNAVILRGGSEAINSNKAIVKALCEGIKESGLPEYSLQLIENTSREIANEMMRLNEYIDVLIPRGGAGLIQAVVKNATVPVIETGVGNCHVYVDEEADFKMAEDIIINAKTSRPAVCNAEEKLLVNEKIAEEFLPKIISALREKNVEVRGDSSVMKIVDDVKEATDEDWGKEYLDFIIGIKIVNNIDEAIKHINKYGSGHSEAIITNNYQNSQKFLQRVDAAAVYVNASTRFTDGCEFGFGAEIGISTQKLHARGPMGLNELTTTKYIIYGNGQIR.

The protein belongs to the gamma-glutamyl phosphate reductase family.

The protein resides in the cytoplasm. The catalysed reaction is L-glutamate 5-semialdehyde + phosphate + NADP(+) = L-glutamyl 5-phosphate + NADPH + H(+). The protein operates within amino-acid biosynthesis; L-proline biosynthesis; L-glutamate 5-semialdehyde from L-glutamate: step 2/2. Its function is as follows. Catalyzes the NADPH-dependent reduction of L-glutamate 5-phosphate into L-glutamate 5-semialdehyde and phosphate. The product spontaneously undergoes cyclization to form 1-pyrroline-5-carboxylate. The chain is Gamma-glutamyl phosphate reductase from Clostridium botulinum (strain Eklund 17B / Type B).